We begin with the raw amino-acid sequence, 338 residues long: Glyceraldehyde-3-phosphate dehydrogenase GAPC2, cytosolic (338 aa).

NAD(+) is bound by residues 15 to 16, Asp37, and Arg84; that span reads RI. Residue 155 to 157 participates in D-glyceraldehyde 3-phosphate binding; the sequence is SCT. The active-site Nucleophile is Cys156. Cys156 bears the S-glutathionyl cysteine; transient; alternate mark. Cys156 is subject to S-nitrosocysteine; transient; alternate. Cys160 carries the post-translational modification S-nitrosocysteine; transient. D-glyceraldehyde 3-phosphate is bound by residues Thr186, 215-216, and Arg238; that span reads TG. Asn320 serves as a coordination point for NAD(+).

The protein belongs to the glyceraldehyde-3-phosphate dehydrogenase family. In terms of assembly, homotetramer. Interacts with PLDDELTA. Binds to DPB3-1/NF-YC10 in response to heat-stress; this interaction promotes DPB3-1/NF-YC10 DNA-binding ability to its target promoter. In terms of processing, S-glutathionylation at Cys-156 in the presence of oxidized glutathione (GSSG). S-nitrosylation at Cys-156 and Cys-160 in the presence of S-nitrosoglutathione (GSNO) or sodium nitroprusside (SNP). These reactions may be both a protective mechanism against irreversible oxidation and a mean to store inhibited enzyme in a recoverable form.

The protein resides in the cytoplasm. It localises to the nucleus. It catalyses the reaction D-glyceraldehyde 3-phosphate + phosphate + NAD(+) = (2R)-3-phospho-glyceroyl phosphate + NADH + H(+). The protein operates within carbohydrate degradation; glycolysis; pyruvate from D-glyceraldehyde 3-phosphate: step 1/5. Its activity is regulated as follows. Inhibition by oxidized glutathione (GSSG), S-nitrosoglutathione (GSNO) and hydrogen peroxide. In terms of biological role, key enzyme in glycolysis that catalyzes the first step of the pathway by converting D-glyceraldehyde 3-phosphate (G3P) into 3-phospho-D-glyceroyl phosphate. Essential for the maintenance of cellular ATP levels and carbohydrate metabolism. Binds DNA in vitro. Together with DNA polymerase II subunit B3-1 (DPB3-1) and GAPC1, enhances heat tolerance and promotes the expression of heat-inducible genes. In Arabidopsis thaliana (Mouse-ear cress), this protein is Glyceraldehyde-3-phosphate dehydrogenase GAPC2, cytosolic.